Consider the following 234-residue polypeptide: UPF0173 metal-dependent hydrolase R01310 (234 aa).

This sequence belongs to the UPF0173 family.

This chain is UPF0173 metal-dependent hydrolase R01310, found in Rhizobium meliloti (strain 1021) (Ensifer meliloti).